We begin with the raw amino-acid sequence, 484 residues long: Putative sodium/proton-dependent alanine carrier protein YrbD (484 aa).

11 helical membrane-spanning segments follow: residues 11 to 31 (VLWSTPVIYILLGIGFAFSIM), 66 to 88 (ALSGRVGTGNIAGVATAIAFGGP), 92 to 114 (FWMWAIAFIGAASAFVESTLAQI), 139 to 159 (WFAVLFAAAALIAMAFLMPGV), 172 to 192 (FGISPFVTGCGLVLLLGFIIF), 205 to 225 (IVPFMAIGYILLSLIIIVMNV), 238 to 258 (SAFALDSAFGGLIGMAISWGV), 292 to 312 (AFSVYIDTLFVCSATAFMILF), 350 to 370 (GFGAGFVAIALFFFAFTTIMA), 390 to 410 (WAMLGLKLIILAATFYGTVKT), and 416 to 436 (ALGDAGLGIMVWLNVIAIVLL).

The protein belongs to the alanine or glycine:cation symporter (AGCS) (TC 2.A.25) family.

The protein resides in the cell membrane. This is Putative sodium/proton-dependent alanine carrier protein YrbD (yrbD) from Bacillus subtilis (strain 168).